Here is a 159-residue protein sequence, read N- to C-terminus: MNFSIPTFVWTIINFLLLLVVLSYFLFKPVNEIIDKRSKDIEGDIEQARIDKDKAEELRIANEEEYKAAKKEGKIIVENYKAKAENVSEEIISDAHKEAEIIIERAKKEIQREREKAEYEIKNKTIELSLELSKKALERSIDEKMHRELIEEFISKVGN.

Residues 7-27 (TFVWTIINFLLLLVVLSYFLF) traverse the membrane as a helical segment.

Belongs to the ATPase B chain family. As to quaternary structure, F-type ATPases have 2 components, F(1) - the catalytic core - and F(0) - the membrane proton channel. F(1) has five subunits: alpha(3), beta(3), gamma(1), delta(1), epsilon(1). F(0) has three main subunits: a(1), b(2) and c(10-14). The alpha and beta chains form an alternating ring which encloses part of the gamma chain. F(1) is attached to F(0) by a central stalk formed by the gamma and epsilon chains, while a peripheral stalk is formed by the delta and b chains.

Its subcellular location is the cell membrane. Its function is as follows. F(1)F(0) ATP synthase produces ATP from ADP in the presence of a proton or sodium gradient. F-type ATPases consist of two structural domains, F(1) containing the extramembraneous catalytic core and F(0) containing the membrane proton channel, linked together by a central stalk and a peripheral stalk. During catalysis, ATP synthesis in the catalytic domain of F(1) is coupled via a rotary mechanism of the central stalk subunits to proton translocation. In terms of biological role, component of the F(0) channel, it forms part of the peripheral stalk, linking F(1) to F(0). The sequence is that of ATP synthase subunit b from Clostridium novyi (strain NT).